The following is a 404-amino-acid chain: Demethylphylloquinone reductase NdbB (404 aa).

7–43 (RICILGGGFGGLYTALRLGQLSWEGHTPPEIVLVDQR) contacts FAD. 159 to 195 (IRIAIVGGGYSGVELAAKLGDRLGERGRIRIIERGKE) lines the NADP(+) pocket.

Belongs to the NADH dehydrogenase family. Requires FAD as cofactor.

The enzyme catalyses demethylphylloquinone + NADPH + H(+) = demethylphylloquinol + NADP(+). It functions in the pathway cofactor biosynthesis; phylloquinone biosynthesis. With respect to regulation, inhibited by dicumarol. Bifunctional oxidoreductase probably ables to act both on prenyl naphthoquinones and on prenyl benzoquinones. Catalyzes the penultimate step in the biosynthesis of vitamin K1. This chain is Demethylphylloquinone reductase NdbB, found in Synechocystis sp. (strain ATCC 27184 / PCC 6803 / Kazusa).